Reading from the N-terminus, the 307-residue chain is Glutaminase (307 aa).

The substrate site is built by Ser66, Asn116, Glu160, Asn167, Tyr191, Tyr243, and Val261.

The protein belongs to the glutaminase family. As to quaternary structure, homotetramer.

It carries out the reaction L-glutamine + H2O = L-glutamate + NH4(+). The polypeptide is Glutaminase (Pseudoalteromonas translucida (strain TAC 125)).